The primary structure comprises 396 residues: Phosphoglycerate kinase (396 aa).

Substrate is bound by residues 21 to 23, arginine 36, 59 to 62, arginine 119, and arginine 156; these read DFN and HLGK. Residues lysine 206, glutamate 325, and 352–355 contribute to the ATP site; that span reads GGDS.

The protein belongs to the phosphoglycerate kinase family. As to quaternary structure, monomer.

It localises to the cytoplasm. It carries out the reaction (2R)-3-phosphoglycerate + ATP = (2R)-3-phospho-glyceroyl phosphate + ADP. It participates in carbohydrate degradation; glycolysis; pyruvate from D-glyceraldehyde 3-phosphate: step 2/5. The polypeptide is Phosphoglycerate kinase (Staphylococcus epidermidis (strain ATCC 35984 / DSM 28319 / BCRC 17069 / CCUG 31568 / BM 3577 / RP62A)).